Here is a 492-residue protein sequence, read N- to C-terminus: ATP synthase subunit beta, chloroplastic (492 aa).

170-177 contacts ATP; it reads GGAGVGKT.

It belongs to the ATPase alpha/beta chains family. As to quaternary structure, F-type ATPases have 2 components, CF(1) - the catalytic core - and CF(0) - the membrane proton channel. CF(1) has five subunits: alpha(3), beta(3), gamma(1), delta(1), epsilon(1). CF(0) has four main subunits: a(1), b(1), b'(1) and c(9-12).

It localises to the plastid. Its subcellular location is the chloroplast thylakoid membrane. It catalyses the reaction ATP + H2O + 4 H(+)(in) = ADP + phosphate + 5 H(+)(out). Functionally, produces ATP from ADP in the presence of a proton gradient across the membrane. The catalytic sites are hosted primarily by the beta subunits. The sequence is that of ATP synthase subunit beta, chloroplastic from Anthoceros angustus (Hornwort).